Here is a 928-residue protein sequence, read N- to C-terminus: Isoleucine--tRNA ligase (928 aa).

The short motif at 57–67 is the 'HIGH' region element; sequence PFANGNIHMGH. L-isoleucyl-5'-AMP is bound at residue Glu-554. The 'KMSKS' region signature appears at 595-599; that stretch reads KMSKS. Lys-598 contributes to the ATP binding site. Residues Cys-887, Cys-890, Cys-907, and Cys-910 each contribute to the Zn(2+) site.

Belongs to the class-I aminoacyl-tRNA synthetase family. IleS type 1 subfamily. Monomer. It depends on Zn(2+) as a cofactor.

Its subcellular location is the cytoplasm. The catalysed reaction is tRNA(Ile) + L-isoleucine + ATP = L-isoleucyl-tRNA(Ile) + AMP + diphosphate. Catalyzes the attachment of isoleucine to tRNA(Ile). As IleRS can inadvertently accommodate and process structurally similar amino acids such as valine, to avoid such errors it has two additional distinct tRNA(Ile)-dependent editing activities. One activity is designated as 'pretransfer' editing and involves the hydrolysis of activated Val-AMP. The other activity is designated 'posttransfer' editing and involves deacylation of mischarged Val-tRNA(Ile). The protein is Isoleucine--tRNA ligase of Lactobacillus johnsonii (strain CNCM I-12250 / La1 / NCC 533).